Reading from the N-terminus, the 90-residue chain is Probable Fe(2+)-trafficking protein (90 aa).

This sequence belongs to the Fe(2+)-trafficking protein family.

Functionally, could be a mediator in iron transactions between iron acquisition and iron-requiring processes, such as synthesis and/or repair of Fe-S clusters in biosynthetic enzymes. This is Probable Fe(2+)-trafficking protein from Herminiimonas arsenicoxydans.